The chain runs to 1242 residues: DNA-directed RNA polymerase RPB2 homolog (1242 aa).

Residues 1180 to 1201 form a C4-type zinc finger; that stretch reads CRNCGEPAIYNASHPIYKCMNC.

It belongs to the RNA polymerase beta chain family. Part of the viral DNA-directed RNA polymerase that consists of 8 polII-like subunits (RPB1, RPB2, RPB3, RPB5, RPB6, RPB7, RPB9, RPB10), a capping enzyme and a termination factor.

The protein localises to the host cytoplasm. It is found in the virion. The enzyme catalyses RNA(n) + a ribonucleoside 5'-triphosphate = RNA(n+1) + diphosphate. Its function is as follows. Catalytic component of the DNA-directed RNA polymerase (RNAP) that catalyzes the transcription in the cytoplasm of viral DNA into RNA using the four ribonucleoside triphosphates as substrates. Forms the polymerase active center together with RPB1. Part of the core element with the central large cleft, the clamp element that moves to open and close the cleft and the jaws that are thought to grab the incoming DNA template. The chain is DNA-directed RNA polymerase RPB2 homolog from Ornithodoros (relapsing fever ticks).